Here is a 525-residue protein sequence, read N- to C-terminus: GMP synthase [glutamine-hydrolyzing] (525 aa).

Residues 9–202 form the Glutamine amidotransferase type-1 domain; that stretch reads SILIIDFGSQ…VHKIVGLKSD (194 aa). The active-site Nucleophile is the C86. Catalysis depends on residues H176 and E178. The region spanning 203–400 is the GMPS ATP-PPase domain; the sequence is WTMAAYRAEM…LGLPESFIGR (198 aa). ATP is bound at residue 230 to 236; sequence SGGVDSS.

As to quaternary structure, homodimer.

It carries out the reaction XMP + L-glutamine + ATP + H2O = GMP + L-glutamate + AMP + diphosphate + 2 H(+). It participates in purine metabolism; GMP biosynthesis; GMP from XMP (L-Gln route): step 1/1. Its function is as follows. Catalyzes the synthesis of GMP from XMP. The polypeptide is GMP synthase [glutamine-hydrolyzing] (Agrobacterium fabrum (strain C58 / ATCC 33970) (Agrobacterium tumefaciens (strain C58))).